Consider the following 89-residue polypeptide: Small ribosomal subunit protein uS15 (89 aa).

This sequence belongs to the universal ribosomal protein uS15 family. As to quaternary structure, part of the 30S ribosomal subunit. Forms a bridge to the 50S subunit in the 70S ribosome, contacting the 23S rRNA.

In terms of biological role, one of the primary rRNA binding proteins, it binds directly to 16S rRNA where it helps nucleate assembly of the platform of the 30S subunit by binding and bridging several RNA helices of the 16S rRNA. Its function is as follows. Forms an intersubunit bridge (bridge B4) with the 23S rRNA of the 50S subunit in the ribosome. The chain is Small ribosomal subunit protein uS15 from Azorhizobium caulinodans (strain ATCC 43989 / DSM 5975 / JCM 20966 / LMG 6465 / NBRC 14845 / NCIMB 13405 / ORS 571).